Here is a 784-residue protein sequence, read N- to C-terminus: E3 ubiquitin-protein ligase RNF43 (784 aa).

Positions 1–23 (MSGGHQLQLAVLWPWLLMATLHA) are cleaved as a signal peptide. The Extracellular segment spans residues 24–197 (GFGHTGRVLA…LKEPPAGANY (174 aa)). N-linked (GlcNAc...) asparagine glycans are attached at residues Asn62 and Asn92. Residues Cys91 and Cys119 are joined by a disulfide bond. The helical transmembrane segment at 198 to 218 (DVWILLTVVGTVFVIILASVL) threads the bilayer. The Cytoplasmic portion of the chain corresponds to 219-784 (RIRCRPHHSR…ELEELCEQAV (566 aa)). The RING-type; atypical zinc-finger motif lies at 272–313 (CAICLEEFSEGQELRVISCLHEFHRTCVDPWLYQHRTCPLCM). Disordered stretches follow at residues 364–407 (TSVA…HLAV), 459–478 (ADGP…SSDS), and 516–671 (DLQG…SLPP). The segment covering 386 to 395 (RHQRLPRTSH) has biased composition (basic residues). Residues 464-478 (SDSSSGPCHGSSSDS) show a composition bias toward low complexity. Positions 548–568 (IHYHRHRHHHYKRQFQWHGRK) are enriched in basic residues. The span at 583 to 608 (SHTQLEPSLPDQQLITPNPTASSMLP) shows a compositional bias: polar residues. Low complexity predominate over residues 618–629 (EPAPGLAEASSP).

It belongs to the ZNRF3 family. As to quaternary structure, interacts with AKAP8L, NONO and SFPQ. Interacts with FZD5. Identified in a complex composed of RNF43, LGR5 and RSPO1. Interacts with RSPO2. Interacts with LMBR1L. In terms of processing, autoubiquitinated. As to expression, expressed in crypt base columnar cells of small intestinal epithelium. Crypt base columnar cells are small cycling cells residing between the terminally differentiated Paneth cells at crypt bottoms. Colocalizes with Lgr5-positive stem cells.

It localises to the cell membrane. The protein localises to the endoplasmic reticulum membrane. It is found in the nucleus envelope. The enzyme catalyses S-ubiquitinyl-[E2 ubiquitin-conjugating enzyme]-L-cysteine + [acceptor protein]-L-lysine = [E2 ubiquitin-conjugating enzyme]-L-cysteine + N(6)-ubiquitinyl-[acceptor protein]-L-lysine.. It functions in the pathway protein modification; protein ubiquitination. Functionally, E3 ubiquitin-protein ligase that acts as a negative regulator of the Wnt signaling pathway by mediating the ubiquitination, endocytosis and subsequent degradation of Wnt receptor complex components Frizzled. Acts on both canonical and non-canonical Wnt signaling pathway. Along with RSPO2 and ZNRF3, constitutes a master switch that governs limb specification. This is E3 ubiquitin-protein ligase RNF43 (Rnf43) from Mus musculus (Mouse).